We begin with the raw amino-acid sequence, 181 residues long: Inner membrane-spanning protein YciB (181 aa).

Transmembrane regions (helical) follow at residues 8–28, 53–73, 76–96, 121–141, and 149–169; these read FPIICFFVAYKFWGIYIATAA, ITLIFILLLGSFTLVFHNAIF, WKPTIVYWIFAIVLFGSHFFG, LSWALFFLILGVLNLFVVYNF, and FKLFGTLVLTLVFILGQAFYI.

It belongs to the YciB family.

The protein localises to the cell inner membrane. Functionally, plays a role in cell envelope biogenesis, maintenance of cell envelope integrity and membrane homeostasis. This Coxiella burnetii (strain RSA 331 / Henzerling II) protein is Inner membrane-spanning protein YciB.